A 177-amino-acid polypeptide reads, in one-letter code: UPF0114 protein HPAG1_0183 (177 aa).

4 consecutive transmembrane segments (helical) span residues 15-35 (WLLA…GYVF), 54-74 (LVLS…VLMV), 102-122 (FNAL…IFLL), and 145-165 (PIFW…LAAV).

It belongs to the UPF0114 family.

The protein resides in the cell membrane. This chain is UPF0114 protein HPAG1_0183, found in Helicobacter pylori (strain HPAG1).